A 280-amino-acid chain; its full sequence is Adenosylcobinamide-GDP ribazoletransferase (280 aa).

6 helical membrane-spanning segments follow: residues Gly44–Leu64, Ser69–Phe89, Leu111–Leu131, Val135–Val155, Ile189–Ile209, and Ala226–Ala246.

Belongs to the CobS family. The cofactor is Mg(2+).

It is found in the cell inner membrane. It carries out the reaction alpha-ribazole + adenosylcob(III)inamide-GDP = adenosylcob(III)alamin + GMP + H(+). The enzyme catalyses alpha-ribazole 5'-phosphate + adenosylcob(III)inamide-GDP = adenosylcob(III)alamin 5'-phosphate + GMP + H(+). It functions in the pathway cofactor biosynthesis; adenosylcobalamin biosynthesis; adenosylcobalamin from cob(II)yrinate a,c-diamide: step 7/7. Joins adenosylcobinamide-GDP and alpha-ribazole to generate adenosylcobalamin (Ado-cobalamin). Also synthesizes adenosylcobalamin 5'-phosphate from adenosylcobinamide-GDP and alpha-ribazole 5'-phosphate. This is Adenosylcobinamide-GDP ribazoletransferase from Albidiferax ferrireducens (strain ATCC BAA-621 / DSM 15236 / T118) (Rhodoferax ferrireducens).